The following is a 341-amino-acid chain: tRNA N6-adenosine threonylcarbamoyltransferase (341 aa).

The Fe cation site is built by H115 and H119. Substrate-binding positions include 137 to 141 (IVSGG), D170, G183, D187, and N276. D304 is a Fe cation binding site.

Belongs to the KAE1 / TsaD family. Fe(2+) serves as cofactor.

The protein localises to the cytoplasm. The enzyme catalyses L-threonylcarbamoyladenylate + adenosine(37) in tRNA = N(6)-L-threonylcarbamoyladenosine(37) in tRNA + AMP + H(+). Required for the formation of a threonylcarbamoyl group on adenosine at position 37 (t(6)A37) in tRNAs that read codons beginning with adenine. Is involved in the transfer of the threonylcarbamoyl moiety of threonylcarbamoyl-AMP (TC-AMP) to the N6 group of A37, together with TsaE and TsaB. TsaD likely plays a direct catalytic role in this reaction. This Staphylococcus aureus (strain MSSA476) protein is tRNA N6-adenosine threonylcarbamoyltransferase.